A 359-amino-acid polypeptide reads, in one-letter code: TGACG-sequence-specific DNA-binding protein TGA-1A (359 aa).

The span at 44–54 shows a compositional bias: basic and acidic residues; the sequence is KRLDNETEDTS. The disordered stretch occupies residues 44–72; it reads KRLDNETEDTSHGTVGTSNRYEPETSKPV. The 64-residue stretch at 72 to 135 folds into the bZIP domain; that stretch reads VEKVLRRLAQ…GGVDASQLSY (64 aa). Positions 73-125 form a coiled coil; it reads EKVLRRLAQNREAARKSRLRKKAYVQQLENSKLKLIQLEQELERARKQGMCVG. Residues 74–94 are basic motif; that stretch reads KVLRRLAQNREAARKSRLRKK. The leucine-zipper stretch occupies residues 100 to 114; the sequence is LENSKLKLIQLEQEL. The 212-residue stretch at 143–354 folds into the DOG1 domain; it reads TAVFDMEYGH…RVLSSQWATR (212 aa).

It belongs to the bZIP family. As to quaternary structure, binds DNA as a dimer.

It localises to the nucleus. Its function is as follows. Transcriptional activator that binds specifically to the DNA sequence 5'-TGACG-3'. Recognizes ocs elements like the as-1 motif of the cauliflower mosaic virus 35S promoter. Binding to the as-1-like cis elements mediate auxin- and salicylic acid-inducible transcription. Could also bind to the Hex-motif (5'-TGACGTGG-3') another cis-acting element found in plant histone promoters. This is TGACG-sequence-specific DNA-binding protein TGA-1A (TGA1A) from Nicotiana tabacum (Common tobacco).